The following is a 362-amino-acid chain: Cobalt-precorrin-5B C(1)-methyltransferase (362 aa).

The protein belongs to the CbiD family.

The enzyme catalyses Co-precorrin-5B + S-adenosyl-L-methionine = Co-precorrin-6A + S-adenosyl-L-homocysteine. It participates in cofactor biosynthesis; adenosylcobalamin biosynthesis; cob(II)yrinate a,c-diamide from sirohydrochlorin (anaerobic route): step 6/10. In terms of biological role, catalyzes the methylation of C-1 in cobalt-precorrin-5B to form cobalt-precorrin-6A. This is Cobalt-precorrin-5B C(1)-methyltransferase from Methanocaldococcus jannaschii (strain ATCC 43067 / DSM 2661 / JAL-1 / JCM 10045 / NBRC 100440) (Methanococcus jannaschii).